The following is a 161-amino-acid chain: Allophycocyanin alpha chain (161 aa).

Asparagine 71 carries the post-translational modification N4-methylasparagine. Cysteine 81 provides a ligand contact to (2R,3E)-phycocyanobilin.

It belongs to the phycobiliprotein family. As to quaternary structure, heterodimer of an alpha and a beta chain. In terms of processing, contains one covalently linked phycocyanobilin chromophore.

The protein resides in the cellular thylakoid membrane. Its function is as follows. Light-harvesting photosynthetic bile pigment-protein from the phycobiliprotein complex. Allophycocyanin has a maximum absorption at approximately 650 nanometers. This chain is Allophycocyanin alpha chain (apcA), found in Synechocystis sp. (strain PCC 6714) (Aphanocapsa sp. (strain PCC 6714)).